The primary structure comprises 295 residues: Succinate dehydrogenase [ubiquinone] iron-sulfur subunit, mitochondrial (295 aa).

Residues 67–144 (EKPRLQSYTL…DTKIYPLPHM (78 aa)) enclose the 2Fe-2S ferredoxin-type domain. The [2Fe-2S] cluster site is built by Cys106, Cys111, Cys114, and Cys126. Residues 185-215 (ERRRLDGLYECILCACCSTSCPSYWWNQDEY) form the 4Fe-4S ferredoxin-type domain. Positions 195, 198, and 201 each coordinate [4Fe-4S] cluster. Cys205 serves as a coordination point for [3Fe-4S] cluster. A ubiquinone is bound at residue Trp210. [3Fe-4S] cluster-binding residues include Cys252 and Cys258. Cys262 lines the [4Fe-4S] cluster pocket.

The protein belongs to the succinate dehydrogenase/fumarate reductase iron-sulfur protein family. Component of complex II composed of four subunits: a flavoprotein (FP), an iron-sulfur protein (IP), and a cytochrome b composed of a large and a small subunit. [2Fe-2S] cluster is required as a cofactor. The cofactor is [3Fe-4S] cluster. [4Fe-4S] cluster serves as cofactor.

It localises to the mitochondrion inner membrane. The enzyme catalyses a quinone + succinate = fumarate + a quinol. The protein operates within carbohydrate metabolism; tricarboxylic acid cycle; fumarate from succinate (eukaryal route): step 1/1. In terms of biological role, iron-sulfur protein (IP) subunit of succinate dehydrogenase (SDH) that is involved in complex II of the mitochondrial electron transport chain and is responsible for transferring electrons from succinate to ubiquinone (coenzyme Q). The chain is Succinate dehydrogenase [ubiquinone] iron-sulfur subunit, mitochondrial (SDH2) from Mycosarcoma maydis (Corn smut fungus).